The primary structure comprises 155 residues: Urease accessory protein UreE (155 aa).

This sequence belongs to the UreE family.

The protein resides in the cytoplasm. In terms of biological role, involved in urease metallocenter assembly. Binds nickel. Probably functions as a nickel donor during metallocenter assembly. This is Urease accessory protein UreE from Deinococcus radiodurans (strain ATCC 13939 / DSM 20539 / JCM 16871 / CCUG 27074 / LMG 4051 / NBRC 15346 / NCIMB 9279 / VKM B-1422 / R1).